Here is a 58-residue protein sequence, read N- to C-terminus: UPF0391 membrane protein Patl_4137 (58 aa).

2 helical membrane-spanning segments follow: residues 4-24 (WALT…GGIA) and 27-47 (AAGI…LSLV).

The protein belongs to the UPF0391 family.

It is found in the cell membrane. This chain is UPF0391 membrane protein Patl_4137, found in Pseudoalteromonas atlantica (strain T6c / ATCC BAA-1087).